The primary structure comprises 220 residues: Thiamine-phosphate synthase (220 aa).

4-amino-2-methyl-5-(diphosphooxymethyl)pyrimidine is bound by residues 39–43 and asparagine 80; that span reads QLRDK. Aspartate 81 and aspartate 100 together coordinate Mg(2+). 4-amino-2-methyl-5-(diphosphooxymethyl)pyrimidine is bound at residue serine 119. 145–147 serves as a coordination point for 2-[(2R,5Z)-2-carboxy-4-methylthiazol-5(2H)-ylidene]ethyl phosphate; it reads TPT. A 4-amino-2-methyl-5-(diphosphooxymethyl)pyrimidine-binding site is contributed by lysine 148. Glycine 176 contributes to the 2-[(2R,5Z)-2-carboxy-4-methylthiazol-5(2H)-ylidene]ethyl phosphate binding site.

This sequence belongs to the thiamine-phosphate synthase family. Mg(2+) serves as cofactor.

The catalysed reaction is 2-[(2R,5Z)-2-carboxy-4-methylthiazol-5(2H)-ylidene]ethyl phosphate + 4-amino-2-methyl-5-(diphosphooxymethyl)pyrimidine + 2 H(+) = thiamine phosphate + CO2 + diphosphate. It carries out the reaction 2-(2-carboxy-4-methylthiazol-5-yl)ethyl phosphate + 4-amino-2-methyl-5-(diphosphooxymethyl)pyrimidine + 2 H(+) = thiamine phosphate + CO2 + diphosphate. It catalyses the reaction 4-methyl-5-(2-phosphooxyethyl)-thiazole + 4-amino-2-methyl-5-(diphosphooxymethyl)pyrimidine + H(+) = thiamine phosphate + diphosphate. It participates in cofactor biosynthesis; thiamine diphosphate biosynthesis; thiamine phosphate from 4-amino-2-methyl-5-diphosphomethylpyrimidine and 4-methyl-5-(2-phosphoethyl)-thiazole: step 1/1. Its function is as follows. Condenses 4-methyl-5-(beta-hydroxyethyl)thiazole monophosphate (THZ-P) and 2-methyl-4-amino-5-hydroxymethyl pyrimidine pyrophosphate (HMP-PP) to form thiamine monophosphate (TMP). The polypeptide is Thiamine-phosphate synthase (Mycobacterium marinum (strain ATCC BAA-535 / M)).